The primary structure comprises 289 residues: Pyridoxal kinase PdxY (289 aa).

Residues Ser-9 and 44 to 45 (TQ) each bind substrate. ATP-binding residues include Asp-112, Ala-144, Glu-149, and Lys-182. Asp-225 lines the substrate pocket.

Belongs to the pyridoxine kinase family. PdxY subfamily. Homodimer. Mg(2+) is required as a cofactor.

It carries out the reaction pyridoxal + ATP = pyridoxal 5'-phosphate + ADP + H(+). The protein operates within cofactor metabolism; pyridoxal 5'-phosphate salvage; pyridoxal 5'-phosphate from pyridoxal: step 1/1. Its function is as follows. Pyridoxal kinase involved in the salvage pathway of pyridoxal 5'-phosphate (PLP). Catalyzes the phosphorylation of pyridoxal to PLP. The polypeptide is Pyridoxal kinase PdxY (Aliivibrio fischeri (strain ATCC 700601 / ES114) (Vibrio fischeri)).